Here is a 1412-residue protein sequence, read N- to C-terminus: Protein MODIFIER OF SNC1 1 (1412 aa).

Disordered stretches follow at residues 1–276, 384–437, 472–798, 827–888, 909–1144, and 1156–1412; these read MTSS…QSYP, GYGS…TQRP, QQMQ…KQKQ, NEGV…DESI, DIKV…WNDG, and AEEM…GDRN. A compositionally biased stretch (polar residues) spans 56-103; it reads SWGSKSSLNAWGTSSLSPRTESGPGSPSHLSNRPSSGGSVTRPSTADS. A Phosphoserine modification is found at Ser72. A compositionally biased stretch (low complexity) spans 109 to 119; that stretch reads SSSSVAWDSNS. Residues 120–135 are compositionally biased toward polar residues; sequence RPSSASGVFPSNQPSV. 2 stretches are compositionally biased toward basic and acidic residues: residues 197–207 and 236–267; these read AEKDTSEKSTR and ANDR…EGQL. The span at 478-488 shows a compositional bias: basic and acidic residues; the sequence is RNERREIRNDA. Polar residues-rich tracts occupy residues 517–531, 539–553, 565–581, and 610–639; these read KTRT…SSVV, QPRT…NKVS, SKNS…TNKN, and RIVN…TNTE. Residues 665–713 show a composition bias toward basic and acidic residues; sequence DPKDNQRSTMRELARQRAQQRQKEEEERARDQRAKALAKLEELNRRSQI. A coiled-coil region spans residues 667 to 717; it reads KDNQRSTMRELARQRAQQRQKEEEERARDQRAKALAKLEELNRRSQIYEEG. Composition is skewed to polar residues over residues 738–749, 756–779, and 829–847; these read GSHSSNATNSVE, KNTT…QQDN, and GVSS…SAES. Positions 850-862 are enriched in basic residues; that stretch reads PKRKNNRNGKKKH. Positions 877 to 888 are enriched in basic and acidic residues; the sequence is VGKETKSGDESI. Residue Ser883 is modified to Phosphoserine. 2 stretches are compositionally biased toward polar residues: residues 914 to 938 and 983 to 1003; these read GDSS…NWKS and QTTV…QTSS. Basic and acidic residues predominate over residues 1006 to 1023; the sequence is KRVEIERYVPKPIVKEMA. A compositionally biased stretch (polar residues) spans 1056 to 1070; sequence LQPSGSTAGKSGSPS. The span at 1071–1084 shows a compositional bias: basic residues; it reads KSRHGNGRQGKHGR. Positions 1106–1137 are enriched in polar residues; that stretch reads FVTSNQPIRGTVNYHSSKQTEQIAAKDQTTCN. 3 stretches are compositionally biased toward basic and acidic residues: residues 1191 to 1202, 1222 to 1232, and 1242 to 1251; these read DPKKGNKRDFNK, KEGRVPGDHVW, and GGRESTRDKP. Polar residues-rich tracts occupy residues 1266 to 1286 and 1293 to 1307; these read GFTT…QNRS and VEQN…NTGQ. 2 stretches are compositionally biased toward basic and acidic residues: residues 1338–1351 and 1359–1369; these read SNRD…HYEY and YDGERSREQSK. A compositionally biased stretch (low complexity) spans 1384 to 1397; it reads QGQQRQGGYQQQRG. Gly residues predominate over residues 1400 to 1412; that stretch reads GRNGGHGFTGDRN.

As to quaternary structure, interacts with TCP14 and TCP15.

Its function is as follows. Involved in the regulation of the chromatin structure and DNA methylation at the SNC1 locus. Regulates the expression of SNC1 at chromatin level. The chain is Protein MODIFIER OF SNC1 1 (MOS1) from Arabidopsis thaliana (Mouse-ear cress).